A 131-amino-acid polypeptide reads, in one-letter code: Large ribosomal subunit protein bL21 (131 aa).

The segment at 111 to 131 is disordered; sequence VAAATGTADARRAAHNASAKE.

The protein belongs to the bacterial ribosomal protein bL21 family. Part of the 50S ribosomal subunit. Contacts protein L20.

Its function is as follows. This protein binds to 23S rRNA in the presence of protein L20. The polypeptide is Large ribosomal subunit protein bL21 (Cereibacter sphaeroides (strain ATCC 17029 / ATH 2.4.9) (Rhodobacter sphaeroides)).